Reading from the N-terminus, the 427-residue chain is Cryptic catabolic NAD-specific glutamate dehydrogenase GudB (427 aa).

Lys80 and Lys107 together coordinate substrate. Catalysis depends on Lys119, which acts as the Proton donor. Thr203 and Asn234 together coordinate NAD(+). Ser361 contributes to the substrate binding site.

This sequence belongs to the Glu/Leu/Phe/Val dehydrogenases family. Homohexamer.

It carries out the reaction L-glutamate + NAD(+) + H2O = 2-oxoglutarate + NH4(+) + NADH + H(+). Its function is as follows. GudB seems to be intrinsically inactive, however spontaneous mutations removing a 9-bp direct repeat within the wild-type gudB sequence activated the GudB protein and allowed more-efficient utilization of amino acids of the glutamate family (called gutB1). This 3 amino acid insertion presumably causes severe destabilization of the fold of the protein, leading to an inactive enzyme that is very quickly degraded. The cryptic GudB serves as a buffer that may compensate for mutations in the rocG gene and that can also be decryptified for the utilization of glutamate as a single carbon source in the absence of arginine. It is unable to synthesize glutamate. The sequence is that of Cryptic catabolic NAD-specific glutamate dehydrogenase GudB from Bacillus subtilis (strain 168).